The sequence spans 576 residues: Proline--tRNA ligase (576 aa).

This sequence belongs to the class-II aminoacyl-tRNA synthetase family. ProS type 1 subfamily. As to quaternary structure, homodimer.

The protein resides in the cytoplasm. It catalyses the reaction tRNA(Pro) + L-proline + ATP = L-prolyl-tRNA(Pro) + AMP + diphosphate. Its function is as follows. Catalyzes the attachment of proline to tRNA(Pro) in a two-step reaction: proline is first activated by ATP to form Pro-AMP and then transferred to the acceptor end of tRNA(Pro). As ProRS can inadvertently accommodate and process non-cognate amino acids such as alanine and cysteine, to avoid such errors it has two additional distinct editing activities against alanine. One activity is designated as 'pretransfer' editing and involves the tRNA(Pro)-independent hydrolysis of activated Ala-AMP. The other activity is designated 'posttransfer' editing and involves deacylation of mischarged Ala-tRNA(Pro). The misacylated Cys-tRNA(Pro) is not edited by ProRS. The sequence is that of Proline--tRNA ligase from Thiobacillus denitrificans (strain ATCC 25259 / T1).